The primary structure comprises 218 residues: Urease accessory protein UreG (218 aa).

22-29 lines the GTP pocket; sequence GPVGSGKT.

It belongs to the SIMIBI class G3E GTPase family. UreG subfamily. As to quaternary structure, homodimer. UreD, UreF and UreG form a complex that acts as a GTP-hydrolysis-dependent molecular chaperone, activating the urease apoprotein by helping to assemble the nickel containing metallocenter of UreC. The UreE protein probably delivers the nickel.

The protein resides in the cytoplasm. Facilitates the functional incorporation of the urease nickel metallocenter. This process requires GTP hydrolysis, probably effectuated by UreG. In Polaromonas sp. (strain JS666 / ATCC BAA-500), this protein is Urease accessory protein UreG.